A 559-amino-acid polypeptide reads, in one-letter code: MWINFVKLRLFCCLLAVLMVVVLVVNVTQVEYLDRETASATFIDSGGQFVSSQVIRISRNPYCGYERQILSSRERLEEDSLLAALQWQEPDVGPVPFLKSTDPSSSYFVILNSAAFFRVGSQLEVLVHVQDFQRKPKKYGGDYLQARIHSPKLQAGAVGRVVDYQNGFYKVFFTLLWPGQVKVSISLVHPSEGIRVLQYLQEKKPDRVYFKSLFRSGRISETTECNVCLPGSLPLCNFTDLYTGEPWFCFKPKKLPCSSRINHFKGGYLKGLLTATENAFFQSGVNIKMPINSSGPDWVTVIPRNIKETNSLELSQGLGTFPSGYYYKDQWRPRRFKMRQFNDPDNITECLQRKVVYLFGDSTIRQWFEYLTTFVPDLVEFNLGSPKNVGPFLAVDQKHNILLKYRCHGPPIRFTTVFSSDLRYVANELNGIVGGKNTVVAIAVWSHFSTFPLEVYIRRLRNIRRAVVQLLDRSPKTVVVIRTANVQELGPEISLFNSDWYNFQLDTILRKMFSGVGVYLVDAWEMTLAHYLPHKLHPDEVIVKNQVDMFLSFVCPLET.

Positions 1-30 are cleaved as a signal peptide; the sequence is MWINFVKLRLFCCLLAVLMVVVLVVNVTQV. Asn26, Asn237, and Asn346 each carry an N-linked (GlcNAc...) asparagine glycan.

The protein belongs to the NXPE family.

The protein resides in the secreted. This is NXPE family member 3 (NXPE3) from Bos taurus (Bovine).